The following is a 431-amino-acid chain: Hydroxylamine reductase (431 aa).

4 residues coordinate [4Fe-4S] cluster: Cys-5, Cys-8, Cys-17, and Cys-23. 8 residues coordinate hybrid [4Fe-2O-2S] cluster: His-131, Glu-155, Cys-199, Cys-286, Cys-314, Cys-339, Glu-373, and Lys-375. Position 286 is a cysteine persulfide (Cys-286).

Belongs to the HCP family. The cofactor is [4Fe-4S] cluster. Hybrid [4Fe-2O-2S] cluster is required as a cofactor.

The protein resides in the cytoplasm. The enzyme catalyses A + NH4(+) + H2O = hydroxylamine + AH2 + H(+). Functionally, catalyzes the reduction of hydroxylamine to form NH(3) and H(2)O. The sequence is that of Hydroxylamine reductase from Thermotoga petrophila (strain ATCC BAA-488 / DSM 13995 / JCM 10881 / RKU-1).